The primary structure comprises 204 residues: 3,4-dihydroxy-2-butanone 4-phosphate synthase (204 aa).

Glutamate 27 is a Mg(2+) binding site. D-ribulose 5-phosphate is bound at residue aspartate 31. Cysteine 56 is modified (S-glutathionyl cysteine). Residues threonine 82 and 140–144 (RDGHT) each bind D-ribulose 5-phosphate. Histidine 143 lines the Mg(2+) pocket.

The protein belongs to the DHBP synthase family. Homodimer. Mg(2+) is required as a cofactor. Mn(2+) serves as cofactor. S-glutathionylation is reversible and dependent on a glutaredoxin.

It carries out the reaction D-ribulose 5-phosphate = (2S)-2-hydroxy-3-oxobutyl phosphate + formate + H(+). The protein operates within cofactor biosynthesis; riboflavin biosynthesis; 2-hydroxy-3-oxobutyl phosphate from D-ribulose 5-phosphate: step 1/1. Catalyzes the conversion of D-ribulose 5-phosphate to formate and 3,4-dihydroxy-2-butanone 4-phosphate. This Schizosaccharomyces pombe (strain 972 / ATCC 24843) (Fission yeast) protein is 3,4-dihydroxy-2-butanone 4-phosphate synthase.